Reading from the N-terminus, the 326-residue chain is Transmembrane protein PVRIG (326 aa).

Transmembrane regions (helical) follow at residues 26–46 (LVLP…EVWV), 62–78 (CGFL…VSWG), and 172–192 (LAGI…LLHL). Tyrosine 233 is subject to Phosphotyrosine. Positions 296-326 (AGERPPHTGPGLTLFPDPRGPRAMEGPLGVR) are disordered.

Interacts with NECTIN2, hence competing with CD226. As to expression, expressed in some types of immune cells. Expressed at low levels on the surface of freshly isolated T-cells and natural killer (NK) cells, predominantly on CD8+ T-cells (mainly memory/effector, but not naive cells) and on both CD16+ and CD16- NK cells. T-cell expression levels are variable among individuals. Not detected in B-cells, naive or helper T-cells, monocytes, nor neutrophils (at protein level). Not detected in dendritic cells.

It is found in the cell membrane. Its function is as follows. Cell surface receptor for NECTIN2. May act as a coinhibitory receptor that suppresses T-cell receptor-mediated signals. Following interaction with NECTIN2, inhibits T-cell proliferation. Competes with CD226 for NECTIN2-binding. The polypeptide is Transmembrane protein PVRIG (PVRIG) (Homo sapiens (Human)).